Consider the following 172-residue polypeptide: Adenine phosphoribosyltransferase (172 aa).

It belongs to the purine/pyrimidine phosphoribosyltransferase family. As to quaternary structure, homodimer.

It is found in the cytoplasm. It catalyses the reaction AMP + diphosphate = 5-phospho-alpha-D-ribose 1-diphosphate + adenine. It participates in purine metabolism; AMP biosynthesis via salvage pathway; AMP from adenine: step 1/1. Its function is as follows. Catalyzes a salvage reaction resulting in the formation of AMP, that is energically less costly than de novo synthesis. The chain is Adenine phosphoribosyltransferase from Gloeothece citriformis (strain PCC 7424) (Cyanothece sp. (strain PCC 7424)).